The following is a 403-amino-acid chain: Peroxisomal membrane protein PEX13 (403 aa).

Positions 1-11 (MASQPPPPPKP) are enriched in pro residues. Residues 1–68 (MASQPPPPPK…PSQQTGSSSV (68 aa)) are disordered. Over 1–134 (MASQPPPPPK…SSRGAFQSIE (134 aa)) the chain is Peroxisomal matrix. Residues 59–68 (PSQQTGSSSV) are compositionally biased toward polar residues. The chain crosses the membrane as a helical span at residues 135–155 (SIVHAFASVSMMMDATFSAVY). Positions 145–233 (MMMDATFSAV…EDRAATSAKS (89 aa)) are targeting to peroxisomes. Residues 156–174 (NSFRAVLDVANHFSRLKIH) lie on the Cytoplasmic side of the membrane. The chain crosses the membrane as a helical span at residues 175-192 (FTKVFSAFALVRTIRYLY). Residues 175–196 (FTKVFSAFALVRTIRYLYRRLQ) are interaction with PEX19. The Peroxisomal matrix portion of the chain corresponds to 193–233 (RRLQRMLGLRRGSENEDLWAESEGTVACLGAEDRAATSAKS). The chain crosses the membrane as a helical span at residues 234 to 254 (WPIFLFFAVILGGPYLIWKLL). The Cytoplasmic segment spans residues 255-403 (STHSDEVTDS…IGKDGEKQDL (149 aa)). The 65-residue stretch at 272-336 (DDHVVARAEY…PANYVKILGK (65 aa)) folds into the SH3 domain. S354 bears the Phosphoserine mark.

It belongs to the peroxin-13 family. Interacts (via SH3 domain) with PEX14 (via SH3-binding motif); forming the PEX13-PEX14 docking complex. Interacts with PEX19.

It localises to the peroxisome membrane. Component of the PEX13-PEX14 docking complex, a translocon channel that specifically mediates the import of peroxisomal cargo proteins bound to PEX5 receptor. The PEX13-PEX14 docking complex forms a large import pore which can be opened to a diameter of about 9 nm. Mechanistically, PEX5 receptor along with cargo proteins associates with the PEX14 subunit of the PEX13-PEX14 docking complex in the cytosol, leading to the insertion of the receptor into the organelle membrane with the concomitant translocation of the cargo into the peroxisome matrix. Involved in the import of PTS1- and PTS2-type containing proteins. The sequence is that of Peroxisomal membrane protein PEX13 from Homo sapiens (Human).